The chain runs to 208 residues: Guanylate kinase (208 aa).

Residues 3-181 (GSLFIITAAS…ALTELKAIIV (179 aa)) form the Guanylate kinase-like domain. Position 10–17 (10–17 (AASGTGKT)) interacts with ATP.

This sequence belongs to the guanylate kinase family.

The protein resides in the cytoplasm. The catalysed reaction is GMP + ATP = GDP + ADP. Its function is as follows. Essential for recycling GMP and indirectly, cGMP. This is Guanylate kinase from Psychrobacter arcticus (strain DSM 17307 / VKM B-2377 / 273-4).